Reading from the N-terminus, the 721-residue chain is Ophiobolin F synthase oblA (721 aa).

The tract at residues 5-325 is (7Z)-ophiobola-7,19-dien-3-ol synthase; that stretch reads YDQPYSVLLD…RYNLKAEWNE (321 aa). Mg(2+) contacts are provided by Asp-97 and Asp-101. A substrate-binding site is contributed by Asp-97. Positions 97–101 match the DDXXD 1 motif; the sequence is DDVID. Residues 185–188, Asn-229, 233–237, and 316–317 contribute to the substrate site; these read RSLD, SFEKE, and RY. Positions 229 to 237 match the NSE/DTE motif; that stretch reads NDLFSFEKE. Positions 326–721 are geranylfarnesyl diphosphate synthase; sequence LQMLRAKHGV…LRLMMEMLKV (396 aa). The tract at residues 348–387 is disordered; that stretch reads SMDHIWKKGSTQGESKGEKRKRQSVNGTNGVNGTNGVKKP. Over residues 372 to 384 the composition is skewed to low complexity; that stretch reads VNGTNGVNGTNGV. Isopentenyl diphosphate is bound by residues Lys-432, Arg-435, and His-464. The Mg(2+) site is built by Asp-471 and Asp-475. The DDXXD 2 signature appears at 471-475; the sequence is DDLED. Position 480 (Arg-480) interacts with dimethylallyl diphosphate. Arg-481 lines the isopentenyl diphosphate pocket. Residues Lys-558, Thr-559, Gln-597, Asn-604, Lys-614, and Lys-624 each coordinate dimethylallyl diphosphate.

In the N-terminal section; belongs to the terpene synthase family. This sequence in the C-terminal section; belongs to the FPP/GGPP synthase family. It depends on Mg(2+) as a cofactor.

The catalysed reaction is isopentenyl diphosphate + (2E,6E)-farnesyl diphosphate = (2E,6E,10E)-geranylgeranyl diphosphate + diphosphate. The enzyme catalyses isopentenyl diphosphate + (2E,6E,10E)-geranylgeranyl diphosphate = (2E,6E,10E,14E)-geranylfarnesyl diphosphate + diphosphate. It catalyses the reaction (2E,6E,10E,14E)-geranylfarnesyl diphosphate + H2O = ophiobolin F + diphosphate. Its pathway is secondary metabolite biosynthesis; terpenoid biosynthesis. Its function is as follows. Bifunctional sesterterpene synthase; part of the gene cluster that mediates the biosynthesis of the sesterterpenes ophiobolins, fungal phytotoxins with potential anti-cancer activities. The first step of the pathway is performed by the sesterterpene synthase oblA that possesses both prenyl transferase and terpene cyclase activity, converting isopentenyl diphosphate and dimethylallyl diphosphate into geranylfarnesyl diphosphate (GFPP) and further converting GFPP into ophiobolin F, respectively. Other sesterterpenoids (C(25) terpenoids) are found as minor products of oblA. The cytochrome P450 monooxygenase oblB then catalyzes a four-step oxidative transformation of ophiobolin F to yield ophiobolin C. The FAD-dependent oxidoreductase oblC might be involved in a later oxidation step that produces ophiobolin A. The sequence is that of Ophiobolin F synthase oblA from Cochliobolus heterostrophus (strain C5 / ATCC 48332 / race O) (Southern corn leaf blight fungus).